Consider the following 178-residue polypeptide: UPF0302 protein BCAH187_A1683 (178 aa).

This sequence belongs to the UPF0302 family.

The chain is UPF0302 protein BCAH187_A1683 from Bacillus cereus (strain AH187).